The following is a 445-amino-acid chain: UPF0210 protein SPH_0352 (445 aa).

Belongs to the UPF0210 family. Homodimer.

The sequence is that of UPF0210 protein SPH_0352 from Streptococcus pneumoniae (strain Hungary19A-6).